A 212-amino-acid chain; its full sequence is Membrane-bound lytic murein transglycosylase E (212 aa).

It belongs to the transglycosylase Slt family.

It carries out the reaction Exolytic cleavage of the (1-&gt;4)-beta-glycosidic linkage between N-acetylmuramic acid (MurNAc) and N-acetylglucosamine (GlcNAc) residues in peptidoglycan, from either the reducing or the non-reducing ends of the peptidoglycan chains, with concomitant formation of a 1,6-anhydrobond in the MurNAc residue.. Murein-degrading enzyme. May play a role in recycling of muropeptides during cell elongation and/or cell division. The sequence is that of Membrane-bound lytic murein transglycosylase E (mltE) from Buchnera aphidicola subsp. Baizongia pistaciae (strain Bp).